The primary structure comprises 105 residues: Ig lambda-1 chain C region (105 aa).

Positions 6 to 100 (PSVTLFPPSS…EGHTVEKSLS (95 aa)) constitute an Ig-like domain. A disulfide bridge links cysteine 27 with cysteine 86.

The chain is Ig lambda-1 chain C region from Mus musculus (Mouse).